The following is a 754-amino-acid chain: 1,4-alpha-glucan branching enzyme GlgB (754 aa).

The Nucleophile role is filled by D431. The active-site Proton donor is E484.

This sequence belongs to the glycosyl hydrolase 13 family. GlgB subfamily. As to quaternary structure, monomer.

It catalyses the reaction Transfers a segment of a (1-&gt;4)-alpha-D-glucan chain to a primary hydroxy group in a similar glucan chain.. It participates in glycan biosynthesis; glycogen biosynthesis. Catalyzes the formation of the alpha-1,6-glucosidic linkages in glycogen by scission of a 1,4-alpha-linked oligosaccharide from growing alpha-1,4-glucan chains and the subsequent attachment of the oligosaccharide to the alpha-1,6 position. The sequence is that of 1,4-alpha-glucan branching enzyme GlgB from Prochlorococcus marinus (strain AS9601).